The following is a 212-amino-acid chain: Large ribosomal subunit protein uL3 (212 aa).

Belongs to the universal ribosomal protein uL3 family. In terms of assembly, part of the 50S ribosomal subunit. Forms a cluster with proteins L14 and L19.

One of the primary rRNA binding proteins, it binds directly near the 3'-end of the 23S rRNA, where it nucleates assembly of the 50S subunit. The chain is Large ribosomal subunit protein uL3 from Acetivibrio thermocellus (strain ATCC 27405 / DSM 1237 / JCM 9322 / NBRC 103400 / NCIMB 10682 / NRRL B-4536 / VPI 7372) (Clostridium thermocellum).